The chain runs to 130 residues: Small ribosomal subunit protein uS8 (130 aa).

This sequence belongs to the universal ribosomal protein uS8 family. Part of the 30S ribosomal subunit. Contacts proteins S5 and S12.

One of the primary rRNA binding proteins, it binds directly to 16S rRNA central domain where it helps coordinate assembly of the platform of the 30S subunit. This Haemophilus ducreyi (strain 35000HP / ATCC 700724) protein is Small ribosomal subunit protein uS8.